The primary structure comprises 612 residues: Dihydroxy-acid dehydratase (612 aa).

Position 81 (D81) interacts with Mg(2+). C122 lines the [2Fe-2S] cluster pocket. D123 and K124 together coordinate Mg(2+). At K124 the chain carries N6-carboxylysine. [2Fe-2S] cluster is bound at residue C195. E491 is a Mg(2+) binding site. The active-site Proton acceptor is S517.

The protein belongs to the IlvD/Edd family. Homodimer. Requires [2Fe-2S] cluster as cofactor. It depends on Mg(2+) as a cofactor.

The catalysed reaction is (2R)-2,3-dihydroxy-3-methylbutanoate = 3-methyl-2-oxobutanoate + H2O. The enzyme catalyses (2R,3R)-2,3-dihydroxy-3-methylpentanoate = (S)-3-methyl-2-oxopentanoate + H2O. It participates in amino-acid biosynthesis; L-isoleucine biosynthesis; L-isoleucine from 2-oxobutanoate: step 3/4. It functions in the pathway amino-acid biosynthesis; L-valine biosynthesis; L-valine from pyruvate: step 3/4. In terms of biological role, functions in the biosynthesis of branched-chain amino acids. Catalyzes the dehydration of (2R,3R)-2,3-dihydroxy-3-methylpentanoate (2,3-dihydroxy-3-methylvalerate) into 2-oxo-3-methylpentanoate (2-oxo-3-methylvalerate) and of (2R)-2,3-dihydroxy-3-methylbutanoate (2,3-dihydroxyisovalerate) into 2-oxo-3-methylbutanoate (2-oxoisovalerate), the penultimate precursor to L-isoleucine and L-valine, respectively. The polypeptide is Dihydroxy-acid dehydratase (Rhizobium johnstonii (strain DSM 114642 / LMG 32736 / 3841) (Rhizobium leguminosarum bv. viciae)).